A 65-amino-acid chain; its full sequence is Large ribosomal subunit protein bL35 (65 aa).

It belongs to the bacterial ribosomal protein bL35 family.

This Aromatoleum aromaticum (strain DSM 19018 / LMG 30748 / EbN1) (Azoarcus sp. (strain EbN1)) protein is Large ribosomal subunit protein bL35.